The chain runs to 223 residues: Neurotrophic factor BDNF precursor form (223 aa).

The first 5 residues, 1 to 5 (SCMKA), serve as a signal peptide directing secretion. The propeptide occupies 6-114 (APMKEVSIRG…AANMSMRVRR (109 aa)). N-linked (GlcNAc...) asparagine glycosylation occurs at Asn107. Intrachain disulfides connect Cys127/Cys194 and Cys172/Cys223.

The protein belongs to the NGF-beta family.

The protein localises to the secreted. In terms of biological role, promotes the survival of neuronal populations that are all located either in the central nervous system or directly connected to it. The polypeptide is Neurotrophic factor BDNF precursor form (BDNF) (Aspidites melanocephalus (Black-headed python)).